A 130-amino-acid polypeptide reads, in one-letter code: S-adenosylmethionine decarboxylase proenzyme (130 aa).

Residue Ser-63 is the Schiff-base intermediate with substrate; via pyruvic acid of the active site. Residue Ser-63 is modified to Pyruvic acid (Ser); by autocatalysis. His-68 acts as the Proton acceptor; for processing activity in catalysis. Cys-83 functions as the Proton donor; for catalytic activity in the catalytic mechanism.

It belongs to the prokaryotic AdoMetDC family. Type 1 subfamily. In terms of assembly, heterotetramer of two alpha and two beta chains arranged as a dimer of alpha/beta heterodimers. The cofactor is pyruvate. Post-translationally, is synthesized initially as an inactive proenzyme. Formation of the active enzyme involves a self-maturation process in which the active site pyruvoyl group is generated from an internal serine residue via an autocatalytic post-translational modification. Two non-identical subunits are generated from the proenzyme in this reaction, and the pyruvate is formed at the N-terminus of the alpha chain, which is derived from the carboxyl end of the proenzyme. The post-translation cleavage follows an unusual pathway, termed non-hydrolytic serinolysis, in which the side chain hydroxyl group of the serine supplies its oxygen atom to form the C-terminus of the beta chain, while the remainder of the serine residue undergoes an oxidative deamination to produce ammonia and the pyruvoyl group blocking the N-terminus of the alpha chain.

The enzyme catalyses S-adenosyl-L-methionine + H(+) = S-adenosyl 3-(methylsulfanyl)propylamine + CO2. Its pathway is amine and polyamine biosynthesis; S-adenosylmethioninamine biosynthesis; S-adenosylmethioninamine from S-adenosyl-L-methionine: step 1/1. Its function is as follows. Catalyzes the decarboxylation of S-adenosylmethionine to S-adenosylmethioninamine (dcAdoMet), the propylamine donor required for the synthesis of the polyamines spermine and spermidine from the diamine putrescine. In Thermosipho africanus (strain TCF52B), this protein is S-adenosylmethionine decarboxylase proenzyme.